The following is a 249-amino-acid chain: Ribonuclease 3 (249 aa).

In terms of domain architecture, RNase III spans 21-149 (VDHQPLIDAL…LLGAIYLAHG (129 aa)). Residue Glu62 coordinates Mg(2+). Asp66 is an active-site residue. Mg(2+)-binding residues include Asp135 and Glu138. Residue Glu138 is part of the active site. A DRBM domain is found at 176–244 (DWKTTLQERL…AHKAVGFLQD (69 aa)).

Belongs to the ribonuclease III family. As to quaternary structure, homodimer. Mg(2+) is required as a cofactor.

The protein resides in the cytoplasm. The enzyme catalyses Endonucleolytic cleavage to 5'-phosphomonoester.. Its function is as follows. Digests double-stranded RNA. Involved in the processing of primary rRNA transcript to yield the immediate precursors to the large and small rRNAs (23S and 16S). Processes some mRNAs, and tRNAs when they are encoded in the rRNA operon. Processes pre-crRNA and tracrRNA of type II CRISPR loci if present in the organism. This chain is Ribonuclease 3, found in Corynebacterium diphtheriae (strain ATCC 700971 / NCTC 13129 / Biotype gravis).